The following is a 352-amino-acid chain: tRNA-specific 2-thiouridylase MnmA (352 aa).

Residues 6-13 (AMSGGVDS) and leucine 32 contribute to the ATP site. The Nucleophile role is filled by cysteine 101. Cysteine 101 and cysteine 194 form a disulfide bridge. Glycine 125 lines the ATP pocket. The segment at 144–146 (KDQ) is interaction with tRNA. The active-site Cysteine persulfide intermediate is cysteine 194.

Belongs to the MnmA/TRMU family.

It is found in the cytoplasm. It carries out the reaction S-sulfanyl-L-cysteinyl-[protein] + uridine(34) in tRNA + AH2 + ATP = 2-thiouridine(34) in tRNA + L-cysteinyl-[protein] + A + AMP + diphosphate + H(+). Catalyzes the 2-thiolation of uridine at the wobble position (U34) of tRNA, leading to the formation of s(2)U34. This chain is tRNA-specific 2-thiouridylase MnmA, found in Frankia alni (strain DSM 45986 / CECT 9034 / ACN14a).